The chain runs to 388 residues: MRYLTAGESHGPRLTAIIEGIPAGLPLTAEDINEDLRRRQGGYGRGGRMKIENDQVVFTSGVRHGKTTGAPITMDVINKDHQKWLDIMSAEDIEDRLKSKRKITHPRPGHADLVGGIKYRFDDLRNSLERSSARETTMRVAVGAVAKRLLAELDMEIANHVVVFGGKEIDVPENLTVAEIKQRAAQSEVSIVNQEREQEIKDYIDQIKRDGDTIGGVVETVVGGVPVGLGSYVQWDRKLDARLAQAVVSINAFKGVEFGLGFEAGYRKGSQVMDEILWSKEDGYTRRTNNLGGFEGGMTNGQPIVVRGVMKPIPTLYKPLMSVDIETHEPYKATVERSDPTALPAAGMVMEAVVATVLAQEILEKFSSDNLEELKEAVAKHRDYTKNY.

Arg-39 and Arg-45 together coordinate NADP(+). FMN-binding positions include 130-132, 251-252, Gly-296, 311-315, and Arg-337; these read RSS, NA, and KPIPT.

This sequence belongs to the chorismate synthase family. In terms of assembly, homotetramer. Requires FMNH2 as cofactor.

It carries out the reaction 5-O-(1-carboxyvinyl)-3-phosphoshikimate = chorismate + phosphate. It participates in metabolic intermediate biosynthesis; chorismate biosynthesis; chorismate from D-erythrose 4-phosphate and phosphoenolpyruvate: step 7/7. Catalyzes the anti-1,4-elimination of the C-3 phosphate and the C-6 proR hydrogen from 5-enolpyruvylshikimate-3-phosphate (EPSP) to yield chorismate, which is the branch point compound that serves as the starting substrate for the three terminal pathways of aromatic amino acid biosynthesis. This reaction introduces a second double bond into the aromatic ring system. This is Chorismate synthase from Streptococcus pneumoniae serotype 2 (strain D39 / NCTC 7466).